The primary structure comprises 441 residues: Tubulin beta chain, nucleomorph (441 aa).

Residues Gln11, Glu69, Ser138, Gly142, Thr143, Gly144, Asn204, and Asn226 each coordinate GTP. Residue Glu69 coordinates Mg(2+).

The protein belongs to the tubulin family. In terms of assembly, dimer of alpha and beta chains. A typical microtubule is a hollow water-filled tube with an outer diameter of 25 nm and an inner diameter of 15 nM. Alpha-beta heterodimers associate head-to-tail to form protofilaments running lengthwise along the microtubule wall with the beta-tubulin subunit facing the microtubule plus end conferring a structural polarity. Microtubules usually have 13 protofilaments but different protofilament numbers can be found in some organisms and specialized cells. It depends on Mg(2+) as a cofactor.

Its function is as follows. Tubulin is the major constituent of microtubules, a cylinder consisting of laterally associated linear protofilaments composed of alpha- and beta-tubulin heterodimers. Microtubules grow by the addition of GTP-tubulin dimers to the microtubule end, where a stabilizing cap forms. Below the cap, tubulin dimers are in GDP-bound state, owing to GTPase activity of alpha-tubulin. In Guillardia theta (Cryptophyte), this protein is Tubulin beta chain, nucleomorph (tubB).